Reading from the N-terminus, the 95-residue chain is Acyl carrier protein (95 aa).

The region spanning 4–79 is the Carrier domain; the sequence is KEIFERIEQV…HVMELTLDLV (76 aa). Serine 39 bears the O-(pantetheine 4'-phosphoryl)serine mark.

This sequence belongs to the acyl carrier protein (ACP) family. In terms of processing, 4'-phosphopantetheine is transferred from CoA to a specific serine of apo-ACP by AcpS. This modification is essential for activity because fatty acids are bound in thioester linkage to the sulfhydryl of the prosthetic group.

The protein localises to the cytoplasm. It participates in lipid metabolism; fatty acid biosynthesis. Carrier of the growing fatty acid chain in fatty acid biosynthesis. This chain is Acyl carrier protein, found in Saccharopolyspora erythraea (strain ATCC 11635 / DSM 40517 / JCM 4748 / NBRC 13426 / NCIMB 8594 / NRRL 2338).